The following is a 432-amino-acid chain: MTVNDKKRLAIIGGGPGGLAAARVFSQSLPNFEIEIFVKDYDIGGVWHYPEQKSDGRVMYDHLETNISKKLMQFSGFPFEENVPLYPSRRNIWEYLKAYYKTFIANKDAISIHFSTEVTYLKKKNSQWEITSKDELRTTKSDFDFVIVASGHYSVPKLPTNIAGLDLWFDNKGAFHSKDFKNCEFAREKVVIVVGNGSSGQDIANQLTTVAKKVYNSIKEPASNQLKAKLIETVQTIDSADWKNRSVTLSDGRVLQNIDYIIFATGYYYSFPFIEPSVRLEVLGEGVTGDKHSSVNLHNLWEHMIYVKDPTLSFILTPQLVIPFPLSELQAAIMVEVFCKSLPITTTFDSNACGTHNFPKGKDLEYYAELQELLNSIPRRVGHFEPVVWDDRLIDLRNSSYTDKEERNVLLAEHAQALKKKKAPYFLPAPHT.

Residues 13 to 17 (GGGPG) and 46 to 47 (VW) contribute to the FAD site. 65–66 (TN) provides a ligand contact to NADP(+). Residue 117-118 (EV) participates in FAD binding. Residue 199 to 202 (SGQD) coordinates NADP(+).

Belongs to the FMO family. Monomer. FAD serves as cofactor.

Flavin-dependent oxidation of thiol-containing compounds. Probably required for the correct folding of disulfide-bonded proteins. This is Thiol-specific monooxygenase (FMO1) from Saccharomyces cerevisiae (strain ATCC 204508 / S288c) (Baker's yeast).